A 175-amino-acid polypeptide reads, in one-letter code: Large ribosomal subunit protein uL10 (175 aa).

It belongs to the universal ribosomal protein uL10 family. In terms of assembly, part of the ribosomal stalk of the 50S ribosomal subunit. The N-terminus interacts with L11 and the large rRNA to form the base of the stalk. The C-terminus forms an elongated spine to which L12 dimers bind in a sequential fashion forming a multimeric L10(L12)X complex.

Forms part of the ribosomal stalk, playing a central role in the interaction of the ribosome with GTP-bound translation factors. The sequence is that of Large ribosomal subunit protein uL10 from Desulfotalea psychrophila (strain LSv54 / DSM 12343).